The sequence spans 120 residues: Large ribosomal subunit protein uL18 (120 aa).

Belongs to the universal ribosomal protein uL18 family. Part of the 50S ribosomal subunit; part of the 5S rRNA/L5/L18/L25 subcomplex. Contacts the 5S and 23S rRNAs.

Its function is as follows. This is one of the proteins that bind and probably mediate the attachment of the 5S RNA into the large ribosomal subunit, where it forms part of the central protuberance. The polypeptide is Large ribosomal subunit protein uL18 (Gluconobacter oxydans (strain 621H) (Gluconobacter suboxydans)).